Consider the following 550-residue polypeptide: Alkaline phosphatase PhoV (550 aa).

Positions Met1 to Ala20 are cleaved as a signal peptide. Residues Asp48 and Thr89 each coordinate Zn(2+). Thr89 functions as the Phosphothreonine intermediate in the catalytic mechanism. Residues Asn110 and Lys171–Arg173 contribute to the substrate site. Zn(2+) is bound by residues Asp313, His317, Asp360, His361, and His491.

It depends on Zn(2+) as a cofactor.

The protein localises to the cell inner membrane. The catalysed reaction is a phosphate monoester + H2O = an alcohol + phosphate. Its activity is regulated as follows. Subject to competitive inhibition by phosphate. Inhibited by manganese. Magnesium mildly increases enzyme activity when the zinc concentration is suboptimal. Optimal activity is dependent on the presence of 0.01-2% Triton X-100. Triton X-100 at a concentration of 0.05% increases the activity about fivefold relative to that in its absence. The enzyme is even active in Triton X-100 concentrations up to 80%. 50% inhibition by 4 mM EDTA and 50% inhibition by 48 mM sodium citrate. Functionally, alkaline phosphatase with broad substrate specificity. The chain is Alkaline phosphatase PhoV from Synechococcus elongatus (strain ATCC 33912 / PCC 7942 / FACHB-805) (Anacystis nidulans R2).